A 404-amino-acid polypeptide reads, in one-letter code: Phosphoglycerate kinase (404 aa).

Residues 22–24 (DLN), arginine 37, 60–63 (HLGR), arginine 119, and arginine 156 each bind substrate. ATP is bound by residues lysine 206, glycine 302, glutamate 333, and 359–362 (GGDS).

The protein belongs to the phosphoglycerate kinase family. Monomer.

It is found in the cytoplasm. It carries out the reaction (2R)-3-phosphoglycerate + ATP = (2R)-3-phospho-glyceroyl phosphate + ADP. It functions in the pathway carbohydrate degradation; glycolysis; pyruvate from D-glyceraldehyde 3-phosphate: step 2/5. This is Phosphoglycerate kinase from Clavibacter michiganensis subsp. michiganensis (strain NCPPB 382).